The primary structure comprises 193 residues: Molybdenum cofactor guanylyltransferase (193 aa).

GTP-binding positions include 8-10, Lys-21, Asp-67, and Asp-98; that span reads LAG. Asp-98 lines the Mg(2+) pocket.

Belongs to the MobA family. Monomer. Mg(2+) serves as cofactor.

It localises to the cytoplasm. It carries out the reaction Mo-molybdopterin + GTP + H(+) = Mo-molybdopterin guanine dinucleotide + diphosphate. Functionally, transfers a GMP moiety from GTP to Mo-molybdopterin (Mo-MPT) cofactor (Moco or molybdenum cofactor) to form Mo-molybdopterin guanine dinucleotide (Mo-MGD) cofactor. The polypeptide is Molybdenum cofactor guanylyltransferase (Cereibacter sphaeroides (Rhodobacter sphaeroides)).